The chain runs to 190 residues: Holliday junction branch migration complex subunit RuvA (190 aa).

The tract at residues 1–64 (MIGRISGQLA…EDAQILYGFG (64 aa)) is domain I. A domain II region spans residues 65–137 (SATERAAFRQ…LKGKLGADIG (73 aa)). A flexible linker region spans residues 137 to 141 (GVQVS). Positions 142–190 (VSSDSQSDILQALVALGYSDRDAALALKALPKDIGVSDGIKLALKALAK) are domain III.

It belongs to the RuvA family. As to quaternary structure, homotetramer. Forms an RuvA(8)-RuvB(12)-Holliday junction (HJ) complex. HJ DNA is sandwiched between 2 RuvA tetramers; dsDNA enters through RuvA and exits via RuvB. An RuvB hexamer assembles on each DNA strand where it exits the tetramer. Each RuvB hexamer is contacted by two RuvA subunits (via domain III) on 2 adjacent RuvB subunits; this complex drives branch migration. In the full resolvosome a probable DNA-RuvA(4)-RuvB(12)-RuvC(2) complex forms which resolves the HJ.

The protein resides in the cytoplasm. In terms of biological role, the RuvA-RuvB-RuvC complex processes Holliday junction (HJ) DNA during genetic recombination and DNA repair, while the RuvA-RuvB complex plays an important role in the rescue of blocked DNA replication forks via replication fork reversal (RFR). RuvA specifically binds to HJ cruciform DNA, conferring on it an open structure. The RuvB hexamer acts as an ATP-dependent pump, pulling dsDNA into and through the RuvAB complex. HJ branch migration allows RuvC to scan DNA until it finds its consensus sequence, where it cleaves and resolves the cruciform DNA. The chain is Holliday junction branch migration complex subunit RuvA from Polaromonas sp. (strain JS666 / ATCC BAA-500).